Consider the following 466-residue polypeptide: ATP-dependent protease ATPase subunit HslU (466 aa).

Residues Ile18, 60 to 65, Asp279, Glu344, and Arg416 each bind ATP; that span reads GVGKTE.

The protein belongs to the ClpX chaperone family. HslU subfamily. A double ring-shaped homohexamer of HslV is capped on each side by a ring-shaped HslU homohexamer. The assembly of the HslU/HslV complex is dependent on binding of ATP.

It localises to the cytoplasm. ATPase subunit of a proteasome-like degradation complex; this subunit has chaperone activity. The binding of ATP and its subsequent hydrolysis by HslU are essential for unfolding of protein substrates subsequently hydrolyzed by HslV. HslU recognizes the N-terminal part of its protein substrates and unfolds these before they are guided to HslV for hydrolysis. This chain is ATP-dependent protease ATPase subunit HslU, found in Lactobacillus acidophilus (strain ATCC 700396 / NCK56 / N2 / NCFM).